The following is a 214-amino-acid chain: Large ribosomal subunit protein uL3 (214 aa).

The interval 129 to 157 is disordered; the sequence is FGRGPMSHGSKNHRRPGSIGAGTTPGRVF.

The protein belongs to the universal ribosomal protein uL3 family. In terms of assembly, part of the 50S ribosomal subunit. Forms a cluster with proteins L14 and L19.

Its function is as follows. One of the primary rRNA binding proteins, it binds directly near the 3'-end of the 23S rRNA, where it nucleates assembly of the 50S subunit. In Synechococcus sp. (strain JA-2-3B'a(2-13)) (Cyanobacteria bacterium Yellowstone B-Prime), this protein is Large ribosomal subunit protein uL3.